A 124-amino-acid chain; its full sequence is Ribonuclease pancreatic (124 aa).

Positions K1 to I13 are enriched in basic and acidic residues. The tract at residues K1–N24 is disordered. Substrate-binding residues include K7 and R10. H12 functions as the Proton acceptor in the catalytic mechanism. The span at S15–N24 shows a compositional bias: low complexity. Cystine bridges form between C26–C84, C40–C95, C58–C110, and C65–C72. Residue N34 is glycosylated (N-linked (GlcNAc...) asparagine; partial). Substrate contacts are provided by residues K41 to T45, K66, and R85. H119 acts as the Proton donor in catalysis.

It belongs to the pancreatic ribonuclease family. Monomer. Interacts with and forms tight 1:1 complexes with RNH1. Dimerization of two such complexes may occur. Interaction with RNH1 inhibits this protein. Pancreas.

The protein resides in the secreted. The enzyme catalyses an [RNA] containing cytidine + H2O = an [RNA]-3'-cytidine-3'-phosphate + a 5'-hydroxy-ribonucleotide-3'-[RNA].. It catalyses the reaction an [RNA] containing uridine + H2O = an [RNA]-3'-uridine-3'-phosphate + a 5'-hydroxy-ribonucleotide-3'-[RNA].. Endonuclease that catalyzes the cleavage of RNA on the 3' side of pyrimidine nucleotides. Acts on single-stranded and double-stranded RNA. This Antilocapra americana (Pronghorn) protein is Ribonuclease pancreatic (RNASE1).